The following is a 369-amino-acid chain: Aminomethyltransferase (369 aa).

This sequence belongs to the GcvT family. In terms of assembly, the glycine cleavage system is composed of four proteins: P, T, L and H.

It catalyses the reaction N(6)-[(R)-S(8)-aminomethyldihydrolipoyl]-L-lysyl-[protein] + (6S)-5,6,7,8-tetrahydrofolate = N(6)-[(R)-dihydrolipoyl]-L-lysyl-[protein] + (6R)-5,10-methylene-5,6,7,8-tetrahydrofolate + NH4(+). Its function is as follows. The glycine cleavage system catalyzes the degradation of glycine. The polypeptide is Aminomethyltransferase (Alkaliphilus metalliredigens (strain QYMF)).